A 93-amino-acid polypeptide reads, in one-letter code: Small ribosomal subunit protein uS19 (93 aa).

It belongs to the universal ribosomal protein uS19 family.

Protein S19 forms a complex with S13 that binds strongly to the 16S ribosomal RNA. This Frankia alni (strain DSM 45986 / CECT 9034 / ACN14a) protein is Small ribosomal subunit protein uS19.